We begin with the raw amino-acid sequence, 203 residues long: MQAAVASKTNISLKGSTEIVTEFFSYSINTILFQRGLYPPESFTRVAKYGLPILVTNDQSLKDYLDNVLKQLSEWLLSGDVQKLVLVITDIVTKEVLERWVFDVTTDIPKEGEAPRQKPEKEIMNEIQAIIRQITASVTFLPLLPNACTFDLLVYTSKDLAVPQKWEESDPKFITNSQQVKLRSFTTTIHKVESMVAYKISND.

The HORMA domain maps to 14 to 196 (KGSTEIVTEF…TTIHKVESMV (183 aa)). The tract at residues 194–203 (SMVAYKISND) is required for assuming the closed conformation and for interaction with cdc20.

The protein belongs to the MAD2 family. As to quaternary structure, interacts with cdc20.

The protein localises to the nucleus. Its subcellular location is the chromosome. It is found in the centromere. It localises to the kinetochore. The protein resides in the cytoplasm. Component of the spindle-assembly checkpoint that prevents the onset of anaphase until all chromosomes are properly aligned at the metaphase plate. Required for the execution of the mitotic checkpoint which monitors the process of kinetochore-spindle attachment and inhibits the activity of the anaphase promoting complex until all chromosomes are aligned at the metaphase plate. The polypeptide is Mitotic spindle assembly checkpoint protein MAD2A (mad2l1-1) (Dictyostelium discoideum (Social amoeba)).